The chain runs to 163 residues: Putative 4-hydroxy-4-methyl-2-oxoglutarate aldolase (163 aa).

Residues 76–79 (GDML) and Arg-98 each bind substrate. Asp-99 provides a ligand contact to a divalent metal cation.

Belongs to the class II aldolase/RraA-like family. Homotrimer. Requires a divalent metal cation as cofactor.

It catalyses the reaction 4-hydroxy-4-methyl-2-oxoglutarate = 2 pyruvate. The enzyme catalyses oxaloacetate + H(+) = pyruvate + CO2. In terms of biological role, catalyzes the aldol cleavage of 4-hydroxy-4-methyl-2-oxoglutarate (HMG) into 2 molecules of pyruvate. Also contains a secondary oxaloacetate (OAA) decarboxylase activity due to the common pyruvate enolate transition state formed following C-C bond cleavage in the retro-aldol and decarboxylation reactions. The protein is Putative 4-hydroxy-4-methyl-2-oxoglutarate aldolase of Pseudomonas putida (strain W619).